Here is a 320-residue protein sequence, read N- to C-terminus: tRNA N6-adenosine threonylcarbamoyltransferase (320 aa).

Histidine 114 and histidine 118 together coordinate Fe cation. Substrate contacts are provided by residues 136 to 140, aspartate 169, glycine 182, aspartate 186, and asparagine 273; that span reads VVSGG. Residue aspartate 297 coordinates Fe cation.

Belongs to the KAE1 / TsaD family. Requires Fe(2+) as cofactor.

It localises to the cytoplasm. It catalyses the reaction L-threonylcarbamoyladenylate + adenosine(37) in tRNA = N(6)-L-threonylcarbamoyladenosine(37) in tRNA + AMP + H(+). In terms of biological role, required for the formation of a threonylcarbamoyl group on adenosine at position 37 (t(6)A37) in tRNAs that read codons beginning with adenine. Is involved in the transfer of the threonylcarbamoyl moiety of threonylcarbamoyl-AMP (TC-AMP) to the N6 group of A37, together with TsaE and TsaB. TsaD likely plays a direct catalytic role in this reaction. The polypeptide is tRNA N6-adenosine threonylcarbamoyltransferase (Ureaplasma urealyticum serovar 10 (strain ATCC 33699 / Western)).